The following is a 434-amino-acid chain: Trigger factor (434 aa).

Residues 161 to 246 (EDRATLDFTG…LKKVEVRELP (86 aa)) enclose the PPIase FKBP-type domain.

This sequence belongs to the FKBP-type PPIase family. Tig subfamily.

It is found in the cytoplasm. The enzyme catalyses [protein]-peptidylproline (omega=180) = [protein]-peptidylproline (omega=0). In terms of biological role, involved in protein export. Acts as a chaperone by maintaining the newly synthesized protein in an open conformation. Functions as a peptidyl-prolyl cis-trans isomerase. The sequence is that of Trigger factor from Yersinia enterocolitica serotype O:8 / biotype 1B (strain NCTC 13174 / 8081).